The sequence spans 349 residues: Nuclear distribution protein nudE homolog 1-A (349 aa).

The stretch at 22 to 189 forms a coiled coil; that stretch reads VAMKYKQCSE…ELAVQQKQEK (168 aa).

Belongs to the nudE family. As to quaternary structure, self-associates. Interacts with pafah1b1. Post-translationally, phosphorylated in mitosis.

Its subcellular location is the cytoplasm. It localises to the cytoskeleton. The protein localises to the microtubule organizing center. The protein resides in the centrosome. It is found in the spindle. Its subcellular location is the chromosome. It localises to the centromere. The protein localises to the kinetochore. The protein resides in the cleavage furrow. It is found in the cytoplasmic vesicle membrane. Functionally, required for centrosome duplication and formation and function of the mitotic spindle. This is Nuclear distribution protein nudE homolog 1-A (nde1-a) from Xenopus laevis (African clawed frog).